Here is a 218-residue protein sequence, read N- to C-terminus: ATP phosphoribosyltransferase (218 aa).

This sequence belongs to the ATP phosphoribosyltransferase family. Short subfamily. Heteromultimer composed of HisG and HisZ subunits.

The protein resides in the cytoplasm. The catalysed reaction is 1-(5-phospho-beta-D-ribosyl)-ATP + diphosphate = 5-phospho-alpha-D-ribose 1-diphosphate + ATP. The protein operates within amino-acid biosynthesis; L-histidine biosynthesis; L-histidine from 5-phospho-alpha-D-ribose 1-diphosphate: step 1/9. Functionally, catalyzes the condensation of ATP and 5-phosphoribose 1-diphosphate to form N'-(5'-phosphoribosyl)-ATP (PR-ATP). Has a crucial role in the pathway because the rate of histidine biosynthesis seems to be controlled primarily by regulation of HisG enzymatic activity. The chain is ATP phosphoribosyltransferase from Lactiplantibacillus plantarum (strain ATCC BAA-793 / NCIMB 8826 / WCFS1) (Lactobacillus plantarum).